The following is a 1342-amino-acid chain: DNA-directed RNA polymerase subunit beta (1342 aa).

Residues Lys-1022 and Lys-1200 each carry the N6-acetyllysine modification.

This sequence belongs to the RNA polymerase beta chain family. In terms of assembly, the RNAP catalytic core consists of 2 alpha, 1 beta, 1 beta' and 1 omega subunit. When a sigma factor is associated with the core the holoenzyme is formed, which can initiate transcription.

It carries out the reaction RNA(n) + a ribonucleoside 5'-triphosphate = RNA(n+1) + diphosphate. Functionally, DNA-dependent RNA polymerase catalyzes the transcription of DNA into RNA using the four ribonucleoside triphosphates as substrates. The chain is DNA-directed RNA polymerase subunit beta from Shigella dysenteriae serotype 1 (strain Sd197).